A 514-amino-acid polypeptide reads, in one-letter code: Peptide chain release factor 3 (514 aa).

Residues 8-268 (KKRRTFAIIS…TFLKFAPEPH (261 aa)) form the tr-type G domain. GTP-binding positions include 17 to 24 (SHPDAGKT), 85 to 89 (DTPGH), and 139 to 142 (NKLD).

The protein belongs to the TRAFAC class translation factor GTPase superfamily. Classic translation factor GTPase family. PrfC subfamily.

Its subcellular location is the cytoplasm. Its function is as follows. Increases the formation of ribosomal termination complexes and stimulates activities of RF-1 and RF-2. It binds guanine nucleotides and has strong preference for UGA stop codons. It may interact directly with the ribosome. The stimulation of RF-1 and RF-2 is significantly reduced by GTP and GDP, but not by GMP. The polypeptide is Peptide chain release factor 3 (Streptococcus pneumoniae (strain Hungary19A-6)).